A 476-amino-acid polypeptide reads, in one-letter code: Argininosuccinate lyase (476 aa).

This sequence belongs to the lyase 1 family. Argininosuccinate lyase subfamily.

Its subcellular location is the cytoplasm. It carries out the reaction 2-(N(omega)-L-arginino)succinate = fumarate + L-arginine. It functions in the pathway amino-acid biosynthesis; L-arginine biosynthesis; L-arginine from L-ornithine and carbamoyl phosphate: step 3/3. The polypeptide is Argininosuccinate lyase (Leptothrix cholodnii (strain ATCC 51168 / LMG 8142 / SP-6) (Leptothrix discophora (strain SP-6))).